The chain runs to 189 residues: Protein CotJC (189 aa).

Belongs to the manganese catalase family.

Functionally, the cotJ operon proteins affect spore coat composition. They are either required for the normal formation of the inner layers of the coat or are themselves structural components of the coat. This Bacillus subtilis (strain 168) protein is Protein CotJC (cotJC).